Consider the following 366-residue polypeptide: Cobalt-precorrin-5B C(1)-methyltransferase (366 aa).

It belongs to the CbiD family.

It carries out the reaction Co-precorrin-5B + S-adenosyl-L-methionine = Co-precorrin-6A + S-adenosyl-L-homocysteine. The protein operates within cofactor biosynthesis; adenosylcobalamin biosynthesis; cob(II)yrinate a,c-diamide from sirohydrochlorin (anaerobic route): step 6/10. Its function is as follows. Catalyzes the methylation of C-1 in cobalt-precorrin-5B to form cobalt-precorrin-6A. The sequence is that of Cobalt-precorrin-5B C(1)-methyltransferase from Hahella chejuensis (strain KCTC 2396).